The chain runs to 692 residues: MAAARAVARDPGAYARQPPSLRAARLPRLLFLLAVVAAVGPREGGGARLYREGSDAVWLLDSGSVRSATGNSSAAWLVQFHSSWCGHCIGYAPTWRALAADVRDWAAAIRVAALDCAEEKNQDVCRTYDIHFYPTFRYFKAFTKEFTTGENFKGPDRELRTVRQTMIDFLQNHTEGTWPPACPPLDPIQSSDILSFMDSHSGQYHAIVFESNGSYVGREVILDLIPYENIMVSRALDTDKAFLGTLGITSVPSCYLIYPNGSHGLVNVAKPLRSFFSSHLKSLPDVRKKSLFLPEKSNKEEKSEVVVWKEFDRAKLYTADLESGLHYLLRVELAAHRSLAGAQLKTFRDFVTVVAKLFPGRPAVKKLLETLQEWLANLPLDKIPYNAILDLVNNKMQISGIFLTSHVKWVGCQGSRLELRGYPCSLWKLFHTLTVQASTHPEALAGTGFEGHPQAVLQAIRRYIRTFFGCKECGEHFEEMAKESMDSVKTPDQAVLWLWRKHNMVNSRLAGHLSEDPKFPKVPWPTPDLCPACHEEIKGLDSWNEGQVLLFLKQHYSRDNLVDAYSVDQGSPGEWEAQGREQEEGKGLNPSGKSWRHHDTGSLRPPHILGPRTDLSKSLHHRLDLRLQSPQGPQALKEAKAVVPFLGVGFSSLDMSLCVVLYVASSLFLMIMYFFFRVRSKRWKVRLYHPAV.

Residues 1-38 form the signal peptide; it reads MAAARAVARDPGAYARQPPSLRAARLPRLLFLLAVVAA. The Thioredoxin domain occupies 54–172; it reads SDAVWLLDSG…RQTMIDFLQN (119 aa). The N-linked (GlcNAc...) asparagine glycan is linked to Asn71. Catalysis depends on nucleophile residues Cys85 and Cys88. Intrachain disulfides connect Cys85–Cys88 and Cys116–Cys125. Residues Asn172, Asn212, and Asn260 are each glycosylated (N-linked (GlcNAc...) asparagine). Cysteines 412 and 424 form a disulfide. Positions 415-524 constitute an ERV/ALR sulfhydryl oxidase domain; it reads SRLELRGYPC…EDPKFPKVPW (110 aa). Residues Arg420, Trp427, His431, Glu472, His476, 499 to 506, Lys521, and Trp524 each bind FAD; that span reads WRKHNMVN. A disulfide bridge links Cys470 with Cys473. A disulfide bond links Cys530 and Cys533. Residues 568 to 607 are disordered; it reads DQGSPGEWEAQGREQEEGKGLNPSGKSWRHHDTGSLRPPH. The segment covering 577 to 586 has biased composition (basic and acidic residues); it reads AQGREQEEGK. The chain crosses the membrane as a helical span at residues 656–676; that stretch reads SLCVVLYVASSLFLMIMYFFF.

This sequence belongs to the quiescin-sulfhydryl oxidase (QSOX) family. Requires FAD as cofactor.

The protein localises to the membrane. It catalyses the reaction 2 R'C(R)SH + O2 = R'C(R)S-S(R)CR' + H2O2. Catalyzes the oxidation of sulfhydryl groups in peptide and protein thiols to disulfides with the reduction of oxygen to hydrogen peroxide. May contribute to disulfide bond formation in a variety of secreted proteins. The polypeptide is Sulfhydryl oxidase 2 (Qsox2) (Mus musculus (Mouse)).